The primary structure comprises 120 residues: Large ribosomal subunit protein eL18 (120 aa).

It belongs to the eukaryotic ribosomal protein eL18 family.

This is Large ribosomal subunit protein eL18 from Methanococcus maripaludis (strain DSM 14266 / JCM 13030 / NBRC 101832 / S2 / LL).